Consider the following 150-residue polypeptide: Arginine repressor (150 aa).

The protein belongs to the ArgR family.

It is found in the cytoplasm. It functions in the pathway amino-acid biosynthesis; L-arginine biosynthesis [regulation]. Regulates arginine biosynthesis genes. This Staphylococcus carnosus (strain TM300) protein is Arginine repressor.